The sequence spans 420 residues: Tyrosine--tRNA ligase (420 aa).

Residue tyrosine 33 coordinates L-tyrosine. The short motif at 38–47 (PTADSLHIGH) is the 'HIGH' region element. 2 residues coordinate L-tyrosine: tyrosine 168 and glutamine 172. The short motif at 231–235 (KFGKT) is the 'KMSKS' region element. Lysine 234 contacts ATP. An S4 RNA-binding domain is found at 353 to 419 (MLLVDALIKV…GKKNYYLVKL (67 aa)).

The protein belongs to the class-I aminoacyl-tRNA synthetase family. TyrS type 1 subfamily. Homodimer.

The protein localises to the cytoplasm. It carries out the reaction tRNA(Tyr) + L-tyrosine + ATP = L-tyrosyl-tRNA(Tyr) + AMP + diphosphate + H(+). Catalyzes the attachment of tyrosine to tRNA(Tyr) in a two-step reaction: tyrosine is first activated by ATP to form Tyr-AMP and then transferred to the acceptor end of tRNA(Tyr). This chain is Tyrosine--tRNA ligase, found in Desulfitobacterium hafniense (strain DSM 10664 / DCB-2).